The chain runs to 80 residues: WAP four-disulfide core domain protein 15B (80 aa).

Residues 1-20 (MKLLGLSLLAVTILLCCNMA) form the signal peptide. In terms of domain architecture, WAP spans 29–76 (VFSKPGYCPEYRVPCPFVLIPKCRRDKGCKDALKCCFFYCQMRCVDPW). 4 cysteine pairs are disulfide-bonded: cysteine 36/cysteine 64, cysteine 43/cysteine 68, cysteine 51/cysteine 63, and cysteine 57/cysteine 72.

Constitutively expressed in kidney and epididymis.

The protein resides in the secreted. Its function is as follows. Antibacterial protein which inhibits the growth of E.coli and S.aureus. This chain is WAP four-disulfide core domain protein 15B (Wfdc15b), found in Mus musculus (Mouse).